Here is a 419-residue protein sequence, read N- to C-terminus: Carboxypeptidase A1 (419 aa).

The first 16 residues, 1–16 (MQGLLILSVLLGAALG), serve as a signal peptide directing secretion. The propeptide at 17–110 (KEDFVGHQVL…QEQMFASQSR (94 aa)) is activation peptide. A Peptidase M14 domain is found at 121 to 414 (TYHTLDEIYD…LGVLTIMEHT (294 aa)). Zn(2+) is bound by residues histidine 179 and glutamate 182. Substrate contacts are provided by residues 179–182 (HSRE), arginine 237, and 254–255 (NR). Cysteine 248 and cysteine 271 are disulfide-bonded. Residue histidine 306 coordinates Zn(2+). Substrate contacts are provided by residues 307 to 308 (SY) and tyrosine 358. Residue glutamate 380 is the Proton donor/acceptor of the active site.

The protein belongs to the peptidase M14 family. In terms of assembly, monomer. May form a complex with proelastase 2. Requires Zn(2+) as cofactor. In terms of tissue distribution, pancreas.

It is found in the secreted. It carries out the reaction Release of a C-terminal amino acid, but little or no action with -Asp, -Glu, -Arg, -Lys or -Pro.. It catalyses the reaction leukotriene C4 + H2O = leukotriene F4 + glycine. Its activity is regulated as follows. Inhibited by interaction with the S.magnifica carboxypeptidase inhibitor SmCI. Its function is as follows. Carboxypeptidase that catalyzes the release of a C-terminal amino acid, but has little or no action with -Asp, -Glu, -Arg, -Lys or -Pro. Catalyzes the conversion of leukotriene C4 to leukotriene F4 via the hydrolysis of an amide bond. The polypeptide is Carboxypeptidase A1 (CPA1) (Bos taurus (Bovine)).